Consider the following 116-residue polypeptide: Large ribosomal subunit protein uL18 (116 aa).

It belongs to the universal ribosomal protein uL18 family. Part of the 50S ribosomal subunit; part of the 5S rRNA/L5/L18/L25 subcomplex. Contacts the 5S and 23S rRNAs.

Functionally, this is one of the proteins that bind and probably mediate the attachment of the 5S RNA into the large ribosomal subunit, where it forms part of the central protuberance. The polypeptide is Large ribosomal subunit protein uL18 (Psychrobacter arcticus (strain DSM 17307 / VKM B-2377 / 273-4)).